The following is a 222-amino-acid chain: MSEASRDDYKIQSFDAETQQLLKTALKDPGAVDLERVANVIVDHSLQDCVFSKEAGRMCYAIIQAESKQAGQSVFRRGLLNRLQKEYDAREQLRACSLQGWVCYVTFICNIFDYLRVNNMPMMALVNPVYDCLFQLAQPESLSREEEVDCLVLQLHRVGEQLEKMNGQRMDELFILIRDGFLLPTDLSSLARLLLLEMIEFRAAGWKTTPAAHKYYYSEVSD.

The 203-residue stretch at 3–205 (EASRDDYKIQ…LEMIEFRAAG (203 aa)) folds into the MIF4G domain.

This sequence belongs to the MIF4GD family. As to quaternary structure, interacts with EIF4G1, EIF4G2 and SLBP; probably tethered by SLBP to the 3'-end of mRNAs ending with the histone stem-loop, it also interacts with EIF4G1 which is bound to their 5'-end.

Its subcellular location is the cytoplasm. It is found in the nucleus. In terms of biological role, functions in replication-dependent translation of histone mRNAs which differ from other eukaryotic mRNAs in that they do not end with a poly-A tail but a stem-loop. May participate in circularizing those mRNAs specifically enhancing their translation. This chain is MIF4G domain-containing protein (Mif4gd), found in Mus musculus (Mouse).